The sequence spans 299 residues: dTDP-4-dehydrorhamnose reductase (299 aa).

Residues 10–12, D30, 39–40, and 63–65 each bind NADH; these read GQV, DF, and AHT. 11 to 12 is a binding site for NADPH; sequence QV. NADPH contacts are provided by residues 39 to 40, 63 to 65, and Y102; these read DF and AHT. Residue 104–105 participates in dTDP-beta-L-rhamnose binding; the sequence is TD. Residues Y128 and K132 each coordinate NADH. Residues Y128 and K132 each contribute to the NADPH site. Y128 (proton donor/acceptor) is an active-site residue. W153 is a binding site for dTDP-beta-L-rhamnose.

The protein belongs to the dTDP-4-dehydrorhamnose reductase family. In terms of assembly, homodimer. Mg(2+) serves as cofactor.

The enzyme catalyses dTDP-beta-L-rhamnose + NADP(+) = dTDP-4-dehydro-beta-L-rhamnose + NADPH + H(+). It functions in the pathway carbohydrate biosynthesis; dTDP-L-rhamnose biosynthesis. Its pathway is bacterial outer membrane biogenesis; LPS O-antigen biosynthesis. Functionally, involved in the biosynthesis of the dTDP-L-rhamnose which is an important component of lipopolysaccharide (LPS). Catalyzes the reduction of dTDP-6-deoxy-L-lyxo-4-hexulose to yield dTDP-L-rhamnose. RmlD uses NADH and NADPH nearly equally well. This is dTDP-4-dehydrorhamnose reductase (rfbD) from Salmonella typhimurium (strain LT2 / SGSC1412 / ATCC 700720).